A 158-amino-acid chain; its full sequence is Superoxide dismutase [Cu-Zn] (158 aa).

Cu cation contacts are provided by His-46, His-48, and His-63. The cysteines at positions 57 and 149 are disulfide-linked. Residues His-63, His-71, His-80, and Asp-83 each coordinate Zn(2+). His-120 is a binding site for Cu cation.

This sequence belongs to the Cu-Zn superoxide dismutase family. Homodimer. Cu cation is required as a cofactor. The cofactor is Zn(2+).

The protein resides in the cytoplasm. It catalyses the reaction 2 superoxide + 2 H(+) = H2O2 + O2. Functionally, destroys radicals which are normally produced within the cells and which are toxic to biological systems. The polypeptide is Superoxide dismutase [Cu-Zn] (sod-1) (Onchocerca volvulus).